The following is a 398-amino-acid chain: Phosphoglycerate kinase (398 aa).

Substrate contacts are provided by residues 22–24, Arg-38, 61–64, Arg-120, and Arg-153; these read DFN and HLGR. Residues Lys-204, Glu-326, and 352 to 355 each bind ATP; that span reads GGDT.

It belongs to the phosphoglycerate kinase family. In terms of assembly, monomer.

It localises to the cytoplasm. The enzyme catalyses (2R)-3-phosphoglycerate + ATP = (2R)-3-phospho-glyceroyl phosphate + ADP. Its pathway is carbohydrate degradation; glycolysis; pyruvate from D-glyceraldehyde 3-phosphate: step 2/5. In Geobacter metallireducens (strain ATCC 53774 / DSM 7210 / GS-15), this protein is Phosphoglycerate kinase.